The primary structure comprises 86 residues: Sec-independent protein translocase protein TatA (86 aa).

A helical transmembrane segment spans residues 1-21 (MGISIWQLLIILAIVLVLFGA).

The protein belongs to the TatA/E family. As to quaternary structure, the Tat system comprises two distinct complexes: a TatABC complex, containing multiple copies of TatA, TatB and TatC subunits, and a separate TatA complex, containing only TatA subunits. Substrates initially bind to the TatABC complex, which probably triggers association of the separate TatA complex to form the active translocon.

It is found in the cell inner membrane. Its function is as follows. Part of the twin-arginine translocation (Tat) system that transports large folded proteins containing a characteristic twin-arginine motif in their signal peptide across membranes. TatA could form the protein-conducting channel of the Tat system. The sequence is that of Sec-independent protein translocase protein TatA from Hydrogenovibrio crunogenus (strain DSM 25203 / XCL-2) (Thiomicrospira crunogena).